The chain runs to 701 residues: Polyphosphate kinase (701 aa).

N45 provides a ligand contact to ATP. Residues R373 and R403 each coordinate Mg(2+). The PLD phosphodiesterase 1 domain occupies 428 to 462; sequence PGMKIHAKLLLITRKEGDEFVRYAHIGTGNFHERT. H433 acts as the Phosphohistidine intermediate in catalysis. ATP contacts are provided by Y466, R562, and H590. The 31-residue stretch at 585 to 615 folds into the PLD phosphodiesterase 2 domain; it reads DRFLEHPRVLVVHNDGNPQVFISSADWMERN.

It belongs to the polyphosphate kinase 1 (PPK1) family. Mg(2+) is required as a cofactor. An intermediate of this reaction is the autophosphorylated ppk in which a phosphate is covalently linked to a histidine residue through a N-P bond.

It catalyses the reaction [phosphate](n) + ATP = [phosphate](n+1) + ADP. Functionally, catalyzes the reversible transfer of the terminal phosphate of ATP to form a long-chain polyphosphate (polyP). The polypeptide is Polyphosphate kinase (Vibrio cholerae serotype O1 (strain ATCC 39315 / El Tor Inaba N16961)).